Reading from the N-terminus, the 331-residue chain is Meiotic recombination protein P22 (331 aa).

The interval 132–187 (NNIQKEVHQRNSQRRSIQCTPKKRGRKPKQPAKKLQSRISTDQLGSTPSPSKLPAK) is disordered. Positions 152-167 (PKKRGRKPKQPAKKLQ) are enriched in basic residues. A compositionally biased stretch (polar residues) spans 168-181 (SRISTDQLGSTPSP).

The protein belongs to the TOP6B-like family.

The protein resides in the chromosome. Its function is as follows. Required for formation of the mei-W68-mediated double-strand breaks (DSBs) that initiate meiotic recombination. The polypeptide is Meiotic recombination protein P22 (Drosophila melanogaster (Fruit fly)).